We begin with the raw amino-acid sequence, 253 residues long: Polyprenal reductase (253 aa).

The next 4 helical transmembrane spans lie at 18–38 (LSFF…PEFL), 78–98 (FLSL…IIFG), 123–143 (HYLV…ISLY), and 200–220 (IIYS…VWVI).

The protein belongs to the steroid 5-alpha reductase family. Polyprenal reductase subfamily.

It is found in the endoplasmic reticulum membrane. The catalysed reaction is a di-trans,poly-cis-dolichal + NADP(+) = a di-trans,poly-cis-polyprenal + NADPH + H(+). It functions in the pathway protein modification; protein glycosylation. In terms of biological role, plays a key role in early steps of protein N-linked glycosylation by being involved in the conversion of polyprenol into dolichol. Acts as a polyprenal reductase that mediates the reduction of polyprenal into dolichal in a NADP-dependent mechanism. Dolichols are required for the synthesis of dolichol-linked monosaccharides and the oligosaccharide precursor used for N-glycosylation. The sequence is that of Polyprenal reductase from Saccharomyces cerevisiae (strain ATCC 204508 / S288c) (Baker's yeast).